We begin with the raw amino-acid sequence, 2080 residues long: Dedicator of cytokinesis protein 6 (2080 aa).

Basic and acidic residues predominate over residues 20 to 31; sequence EVRKQVSRERSG. Disordered regions lie at residues 20 to 44, 156 to 189, and 408 to 441; these read EVRK…SSLG, QDTP…SGAS, and PQDR…GDDA. Residues 32-42 show a composition bias toward low complexity; sequence SPHSSRRSSSS. Phosphoserine is present on S178. Residues 408–425 are compositionally biased toward basic and acidic residues; that stretch reads PQDRDSDSEGERRPTWAE. The region spanning 546–712 is the C2 DOCK-type domain; the sequence is RNLLFVYPHS…GVFSVELTAV (167 aa). Omega-N-methylarginine is present on R863. Residues S870, S878, and S882 each carry the phosphoserine modification. The interval 1101–1123 is disordered; that stretch reads ASPSPSVSSTTSQSSTFSSQAPD. Residues 1104–1122 are compositionally biased toward low complexity; the sequence is SPSVSSTTSQSSTFSSQAP. At S1341 the chain carries Phosphoserine. The DOCKER domain occupies 1620-2056; the sequence is RGYQGSPDLR…LQPLLTQRLP (437 aa). Residue T2064 is modified to Phosphothreonine. Phosphoserine is present on residues S2065 and S2069.

Belongs to the DOCK family. As to expression, widely expressed with highest levels in lung and heart.

Its subcellular location is the cytoplasm. The protein resides in the perinuclear region. Functionally, acts as a guanine nucleotide exchange factor (GEF) for CDC42 and RAC1 small GTPases. Through its activation of CDC42 and RAC1, regulates neurite outgrowth in an vitro differentiation system. This chain is Dedicator of cytokinesis protein 6 (Dock6), found in Mus musculus (Mouse).